A 776-amino-acid polypeptide reads, in one-letter code: DExH-box ATP-dependent RNA helicase DExH18, mitochondrial (776 aa).

Residues 1–84 (MARGVAGVLR…RSFSSTVDNN (84 aa)) constitute a mitochondrion transit peptide. The interval 80-101 (TVDNNGENDDIEESVGSESDDY) is disordered. Residues 85 to 101 (GENDDIEESVGSESDDY) are compositionally biased toward acidic residues. The 159-residue stretch at 268–426 (FARAMKRKIV…RFKPLVVEAK (159 aa)) folds into the Helicase ATP-binding domain. An ATP-binding site is contributed by 281 to 288 (GPTNSGKT). Residues 361–364 (DEIQ) carry the DEIH box; degenerate motif. The 169-residue stretch at 427–595 (TLLGELKNVK…LFAAQVPDMA (169 aa)) folds into the Helicase C-terminal domain.

This sequence belongs to the DExH box helicase family. In terms of assembly, homodimer; in free form. Component of the mitochondrial degradosome (mtEXO) complex which is a heteropentamer containing 2 copies of SUPV3L1 and 3 copies of PNPT1. The cofactor is Mg(2+). Requires Mn(2+) as cofactor.

Its subcellular location is the nucleus. The protein resides in the mitochondrion matrix. It is found in the mitochondrion nucleoid. The enzyme catalyses ATP + H2O = ADP + phosphate + H(+). Major helicase player in mitochondrial RNA metabolism. Component of the mitochondrial degradosome (mtEXO) complex, that degrades 3' overhang double-stranded RNA with a 3'-to-5' directionality in an ATP-dependent manner. ATPase and ATP-dependent multisubstrate helicase, able to unwind double-stranded (ds) DNA and RNA, and RNA/DNA heteroduplexes in the 5'-to-3' direction. Plays a role in the RNA surveillance system in mitochondria; regulates the stability of mature mRNAs, the removal of aberrantly formed mRNAs and the rapid degradation of non coding processing intermediates. The sequence is that of DExH-box ATP-dependent RNA helicase DExH18, mitochondrial from Arabidopsis thaliana (Mouse-ear cress).